A 66-amino-acid chain; its full sequence is Large ribosomal subunit protein uL29 (66 aa).

It belongs to the universal ribosomal protein uL29 family.

This Hydrogenobaculum sp. (strain Y04AAS1) protein is Large ribosomal subunit protein uL29.